Consider the following 458-residue polypeptide: ATP synthase subunit beta 2 (458 aa).

Residue 148 to 155 coordinates ATP; that stretch reads GGAGVGKT.

The protein belongs to the ATPase alpha/beta chains family. As to quaternary structure, F-type ATPases have 2 components, CF(1) - the catalytic core - and CF(0) - the membrane proton channel. CF(1) has five subunits: alpha(3), beta(3), gamma(1), delta(1), epsilon(1). CF(0) has three main subunits: a(1), b(2) and c(9-12). The alpha and beta chains form an alternating ring which encloses part of the gamma chain. CF(1) is attached to CF(0) by a central stalk formed by the gamma and epsilon chains, while a peripheral stalk is formed by the delta and b chains.

The protein resides in the cell inner membrane. The catalysed reaction is ATP + H2O + 4 H(+)(in) = ADP + phosphate + 5 H(+)(out). Functionally, produces ATP from ADP in the presence of a proton gradient across the membrane. The catalytic sites are hosted primarily by the beta subunits. The polypeptide is ATP synthase subunit beta 2 (Marinomonas sp. (strain MWYL1)).